The chain runs to 130 residues: UPF0102 protein RPA0323 (130 aa).

This sequence belongs to the UPF0102 family.

This chain is UPF0102 protein RPA0323, found in Rhodopseudomonas palustris (strain ATCC BAA-98 / CGA009).